The following is a 343-amino-acid chain: Holliday junction branch migration complex subunit RuvB (343 aa).

Positions 1–181 (MDRIVEIEKV…FGMQFRLQFY (181 aa)) are large ATPase domain (RuvB-L). ATP is bound by residues L20, R21, G62, K65, T66, T67, 128–130 (EDF), R171, Y181, and R218. T66 contacts Mg(2+). The small ATPAse domain (RuvB-S) stretch occupies residues 182–252 (TDNELARIIS…RAKSSLDSLG (71 aa)). The interval 255 to 343 (DLGFDEMDLK…EKQNKGLFNE (89 aa)) is head domain (RuvB-H). Positions 308 and 313 each coordinate DNA.

The protein belongs to the RuvB family. Homohexamer. Forms an RuvA(8)-RuvB(12)-Holliday junction (HJ) complex. HJ DNA is sandwiched between 2 RuvA tetramers; dsDNA enters through RuvA and exits via RuvB. An RuvB hexamer assembles on each DNA strand where it exits the tetramer. Each RuvB hexamer is contacted by two RuvA subunits (via domain III) on 2 adjacent RuvB subunits; this complex drives branch migration. In the full resolvosome a probable DNA-RuvA(4)-RuvB(12)-RuvC(2) complex forms which resolves the HJ.

The protein resides in the cytoplasm. It catalyses the reaction ATP + H2O = ADP + phosphate + H(+). Functionally, the RuvA-RuvB-RuvC complex processes Holliday junction (HJ) DNA during genetic recombination and DNA repair, while the RuvA-RuvB complex plays an important role in the rescue of blocked DNA replication forks via replication fork reversal (RFR). RuvA specifically binds to HJ cruciform DNA, conferring on it an open structure. The RuvB hexamer acts as an ATP-dependent pump, pulling dsDNA into and through the RuvAB complex. RuvB forms 2 homohexamers on either side of HJ DNA bound by 1 or 2 RuvA tetramers; 4 subunits per hexamer contact DNA at a time. Coordinated motions by a converter formed by DNA-disengaged RuvB subunits stimulates ATP hydrolysis and nucleotide exchange. Immobilization of the converter enables RuvB to convert the ATP-contained energy into a lever motion, pulling 2 nucleotides of DNA out of the RuvA tetramer per ATP hydrolyzed, thus driving DNA branch migration. The RuvB motors rotate together with the DNA substrate, which together with the progressing nucleotide cycle form the mechanistic basis for DNA recombination by continuous HJ branch migration. Branch migration allows RuvC to scan DNA until it finds its consensus sequence, where it cleaves and resolves cruciform DNA. This Campylobacter fetus subsp. fetus (strain 82-40) protein is Holliday junction branch migration complex subunit RuvB.